A 208-amino-acid polypeptide reads, in one-letter code: ATP synthase subunit beta, chloroplastic (208 aa).

This sequence belongs to the ATPase alpha/beta chains family. As to quaternary structure, F-type ATPases have 2 components, CF(1) - the catalytic core - and CF(0) - the membrane proton channel. CF(1) has five subunits: alpha(3), beta(3), gamma(1), delta(1), epsilon(1). CF(0) has four main subunits: a(1), b(1), b'(1) and c(9-12).

It localises to the plastid. It is found in the chloroplast thylakoid membrane. The catalysed reaction is ATP + H2O + 4 H(+)(in) = ADP + phosphate + 5 H(+)(out). Produces ATP from ADP in the presence of a proton gradient across the membrane. The catalytic sites are hosted primarily by the beta subunits. This is ATP synthase subunit beta, chloroplastic (atpB) from Lonchitis hirsuta (Tomato fern).